The primary structure comprises 202 residues: MILKRLFDLTAAIFLLCCTSVIILFTIAVVRLKIGSPVFFKQVRPGLHGKPFTLYKFRTMTDERDSKGNLLPDEVRLTKTGRLIRKLSIDELPQLLNVLKGDLSLVGPRPLLMDYLPLYTEKQARRHEVKPGITGWAQINGRNAISWEKKFELDVWYVDNWSFFLDLKILCLTVRKVLVSEGIQQTNHVTAERFTGSGDVSS.

Residues Thr-10–Val-30 traverse the membrane as a helical segment.

It belongs to the bacterial sugar transferase family.

It is found in the cell membrane. Functionally, may be involved in the production of the exopolysaccharide (EPS) component of the extracellular matrix during biofilm formation. EPS is responsible for the adhesion of chains of cells into bundles. This is an uncharacterized protein from Bacillus subtilis (strain 168).